Here is a 173-residue protein sequence, read N- to C-terminus: Protein PLASTID REDOX INSENSITIVE 2, chloroplastic (173 aa).

The N-terminal 55 residues, 1-55 (MATRAWVAAAVALNPQLLPLRSCSPTKSVSPAQRSASMGLRLRSGRPCLGKFVCR), are a transit peptide targeting the chloroplast.

The protein localises to the plastid. The protein resides in the chloroplast stroma. It is found in the chloroplast nucleoid. Required for the activity of the plastid-encoded RNA polymerase (PEP) and full expression of genes transcribed by PEP. In Zea mays (Maize), this protein is Protein PLASTID REDOX INSENSITIVE 2, chloroplastic.